The sequence spans 227 residues: Ribose-5-phosphate isomerase A (227 aa).

Residues 26–29 (TGST), 82–85 (DGAD), and 95–98 (KGGG) contribute to the substrate site. Glu104 (proton acceptor) is an active-site residue. Residue Lys122 participates in substrate binding.

Belongs to the ribose 5-phosphate isomerase family. As to quaternary structure, homodimer.

It carries out the reaction aldehydo-D-ribose 5-phosphate = D-ribulose 5-phosphate. The protein operates within carbohydrate degradation; pentose phosphate pathway; D-ribose 5-phosphate from D-ribulose 5-phosphate (non-oxidative stage): step 1/1. Catalyzes the reversible conversion of ribose-5-phosphate to ribulose 5-phosphate. This chain is Ribose-5-phosphate isomerase A, found in Streptococcus equi subsp. equi (strain 4047).